The sequence spans 396 residues: Major outer membrane porin, serovar A (396 aa).

A signal peptide spans 1–22 (MKKLLKSVLVFAALSSASSLQA).

Belongs to the chlamydial porin (CP) (TC 1.B.2) family. In terms of assembly, part of a disulfide cross-linked outer membrane complex (COMC) composed of the major outer membrane porin (MOMP), the small cysteine-rich protein (OmcA) and the large cysteine-rich periplasmic protein (OmcB).

The protein resides in the cell outer membrane. In elementary bodies (EBs, the infectious stage, which is able to survive outside the host cell) provides the structural integrity of the outer envelope through disulfide cross-links with the small cysteine-rich protein and the large cysteine-rich periplasmic protein. It has been described in publications as the Sarkosyl-insoluble COMC (Chlamydia outer membrane complex), and serves as the functional equivalent of peptidoglycan. Functionally, permits diffusion of specific solutes through the outer membrane. The protein is Major outer membrane porin, serovar A (ompA) of Chlamydia trachomatis.